The chain runs to 717 residues: Segment polarity protein dishevelled homolog DVL-3 (717 aa).

The 82-residue stretch at 1–82 (MGETKVIYHL…RVVCWLVSAD (82 aa)) folds into the DIX domain. The tract at residues 89 to 235 (GSVCADIQSD…PQIERSSSFS (147 aa)) is disordered. Polar residues predominate over residues 118 to 127 (HPNTRGSQEN). Basic and acidic residues predominate over residues 140-155 (ARRERPGRKETSEHAT). The span at 173-189 (ESSSTLMSSELDSTSFF) shows a compositional bias: low complexity. Polar residues predominate over residues 199–210 (RFSNSTEQSSAS). The span at 212-224 (LMRRHKRRRRKPK) shows a compositional bias: basic residues. Residues 248–333 (TVTLNMEKYN…KPGPITLTVA (86 aa)) form the PDZ domain. The region spanning 421–495 (SESGLEVRDR…SEQCYYIFGD (75 aa)) is the DEP domain. The interval 552–653 (PDPAYIYGGG…THQSFGPPGI (102 aa)) is disordered. The span at 564 to 579 (GSQHSEGSRSSGSNRS) shows a compositional bias: low complexity. 2 stretches are compositionally biased toward basic and acidic residues: residues 580-593 (STEK…KGGD) and 602-618 (ESDH…RAAS). Residues 629-645 (HRSHHSIAHSIRSHHTH) are compositionally biased toward basic residues.

The protein belongs to the DSH family. Expressed throughout the epidermis.

The protein resides in the cytoplasm. In terms of biological role, involved in the signal transduction pathway mediated by multiple Wnt genes. Required during ciliogenesis for the docking of basal bodies to the apical plasma membrane. The chain is Segment polarity protein dishevelled homolog DVL-3 from Xenopus laevis (African clawed frog).